We begin with the raw amino-acid sequence, 330 residues long: Protein IN CHLOROPLAST ATPASE BIOGENESIS, chloroplastic (330 aa).

The N-terminal 35 residues, 1–35, are a transit peptide targeting the chloroplast; that stretch reads MGSISMHITPSTALPIRHFRARVSCCSSGHVSFIK.

Interacts with ATPC1.

It localises to the plastid. The protein localises to the chloroplast stroma. In terms of biological role, involved in the assembly of the F(1) ATP synthase in chloroplast thylakoid membranes. Functions downstream of the CPN60 chaperones to promote assembly of the catalytically active core of the chloroplast ATP synthase. Assists the assembly of the ATP synthase gamma subunit into the active F(1) core downstream of CPN60-mediated folding, which is critical for the biogenesis of the chloroplast ATP synthase. The protein is Protein IN CHLOROPLAST ATPASE BIOGENESIS, chloroplastic of Arabidopsis thaliana (Mouse-ear cress).